Consider the following 287-residue polypeptide: 3-hydroxyanthranilate 3,4-dioxygenase (287 aa).

The domain A (catalytic) stretch occupies residues 1–163 (MTNQSLHVNI…SKENETGKPD (163 aa)). R46 contacts O2. H50, E56, and H94 together coordinate Fe cation. E56 is a binding site for substrate. Residues R98 and E108 each coordinate substrate. The linker stretch occupies residues 164 to 180 (PANPIKPAPYPLNTMNV). Residues 181-287 (MTPFSFREWV…AQDPDRKRPY (107 aa)) form a domain B region.

Belongs to the 3-HAO family. As to quaternary structure, monomer. Fe(2+) serves as cofactor.

It is found in the cytoplasm. The protein localises to the cytosol. It catalyses the reaction 3-hydroxyanthranilate + O2 = (2Z,4Z)-2-amino-3-carboxymuconate 6-semialdehyde. It functions in the pathway cofactor biosynthesis; NAD(+) biosynthesis; quinolinate from L-kynurenine: step 3/3. Functionally, catalyzes the oxidative ring opening of 3-hydroxyanthranilate to 2-amino-3-carboxymuconate semialdehyde, which spontaneously cyclizes to quinolinate. The chain is 3-hydroxyanthranilate 3,4-dioxygenase (haao) from Danio rerio (Zebrafish).